Consider the following 399-residue polypeptide: Exodeoxyribonuclease 7 large subunit (399 aa).

Belongs to the XseA family. In terms of assembly, heterooligomer composed of large and small subunits.

It is found in the cytoplasm. It catalyses the reaction Exonucleolytic cleavage in either 5'- to 3'- or 3'- to 5'-direction to yield nucleoside 5'-phosphates.. Its function is as follows. Bidirectionally degrades single-stranded DNA into large acid-insoluble oligonucleotides, which are then degraded further into small acid-soluble oligonucleotides. This chain is Exodeoxyribonuclease 7 large subunit, found in Clostridium botulinum (strain Eklund 17B / Type B).